A 300-amino-acid polypeptide reads, in one-letter code: ESX-5 secretion-associated protein EspG5 (300 aa).

This sequence belongs to the EspG family. As to quaternary structure, interacts specifically with ESX-5-dependent PE/PPE proteins. Binds PPE33 and PPE18. Does not interact with EsxN. Monomer in solution.

The protein localises to the cytoplasm. In terms of biological role, specific chaperone for cognate PE/PPE proteins. Plays an important role in preventing aggregation of PE/PPE dimers. Required for LipY and PE31/PPE18 secretion. In Mycobacterium marinum (strain ATCC BAA-535 / M), this protein is ESX-5 secretion-associated protein EspG5.